The chain runs to 552 residues: 2-methyl-1,2-propanediol dehydrogenase (552 aa).

It belongs to the GMC oxidoreductase family. The cofactor is FAD.

It localises to the cytoplasm. It catalyses the reaction 2-methylpropane-1,2-diol + NAD(+) = 2-hydroxy-2-methylpropanal + NADH + H(+). Involved in the degradation of methyl tert-butyl ether (MTBE). Catalyzes the conversion of 2-methyl 1,2-propanediol (2-M1,2-PD) to hydroxyisobutyraldehyde. This Mycolicibacterium austroafricanum (Mycobacterium austroafricanum) protein is 2-methyl-1,2-propanediol dehydrogenase.